The chain runs to 158 residues: UPF0260 protein RHE_CH01262 (158 aa).

This sequence belongs to the UPF0260 family.

This is UPF0260 protein RHE_CH01262 from Rhizobium etli (strain ATCC 51251 / DSM 11541 / JCM 21823 / NBRC 15573 / CFN 42).